A 340-amino-acid polypeptide reads, in one-letter code: Cytosolic Fe-S cluster assembly factor NBP35 (340 aa).

Positions 1–41 (MPSLVDPVANKTDEGNNRTDLKAPEPEHCPGTESEEAGKAD) are disordered. Positions 11–30 (KTDEGNNRTDLKAPEPEHCP) are enriched in basic and acidic residues. [4Fe-4S] cluster is bound by residues C29, C43, C46, and C52. Residue 82–89 (GKGGVGKS) coordinates ATP. [4Fe-4S] cluster-binding residues include C255 and C258.

This sequence belongs to the Mrp/NBP35 ATP-binding proteins family. NUBP1/NBP35 subfamily. As to quaternary structure, heterotetramer of 2 NBP35 and 2 CFD1 chains. [4Fe-4S] cluster is required as a cofactor.

Its subcellular location is the cytoplasm. It localises to the nucleus. Functionally, component of the cytosolic iron-sulfur (Fe/S) protein assembly (CIA) machinery. Required for maturation of extramitochondrial Fe-S proteins. The NBP35-CFD1 heterotetramer forms a Fe-S scaffold complex, mediating the de novo assembly of an Fe-S cluster and its transfer to target apoproteins. Required for biogenesis and export of both ribosomal subunits, which may reflect a role in assembly of the Fe/S clusters in RLI1, a protein which performs rRNA processing and ribosome export. This chain is Cytosolic Fe-S cluster assembly factor NBP35, found in Yarrowia lipolytica (strain CLIB 122 / E 150) (Yeast).